A 103-amino-acid chain; its full sequence is Large ribosomal subunit protein bL21 (103 aa).

It belongs to the bacterial ribosomal protein bL21 family. As to quaternary structure, part of the 50S ribosomal subunit. Contacts protein L20.

Functionally, this protein binds to 23S rRNA in the presence of protein L20. The chain is Large ribosomal subunit protein bL21 from Paraburkholderia phymatum (strain DSM 17167 / CIP 108236 / LMG 21445 / STM815) (Burkholderia phymatum).